The chain runs to 253 residues: Pimeloyl-[acyl-carrier protein] methyl ester esterase (253 aa).

Residues tryptophan 18, serine 78–leucine 79, and phenylalanine 139–aspartate 143 each bind substrate. Residue serine 78 is the Nucleophile of the active site. Residues aspartate 203 and histidine 231 contribute to the active site. Histidine 231 lines the substrate pocket.

It belongs to the AB hydrolase superfamily. Carboxylesterase BioH family. In terms of assembly, monomer.

It localises to the cytoplasm. It catalyses the reaction 6-carboxyhexanoyl-[ACP] methyl ester + H2O = 6-carboxyhexanoyl-[ACP] + methanol + H(+). Its pathway is cofactor biosynthesis; biotin biosynthesis. In terms of biological role, the physiological role of BioH is to remove the methyl group introduced by BioC when the pimeloyl moiety is complete. It allows to synthesize pimeloyl-ACP via the fatty acid synthetic pathway through the hydrolysis of the ester bonds of pimeloyl-ACP esters. The chain is Pimeloyl-[acyl-carrier protein] methyl ester esterase from Xanthomonas oryzae pv. oryzae (strain MAFF 311018).